Here is a 399-residue protein sequence, read N- to C-terminus: Phosphate acyltransferase (399 aa).

The protein belongs to the PlsX family. Homodimer. Probably interacts with PlsY.

It is found in the cytoplasm. It catalyses the reaction a fatty acyl-[ACP] + phosphate = an acyl phosphate + holo-[ACP]. Its pathway is lipid metabolism; phospholipid metabolism. Catalyzes the reversible formation of acyl-phosphate (acyl-PO(4)) from acyl-[acyl-carrier-protein] (acyl-ACP). This enzyme utilizes acyl-ACP as fatty acyl donor, but not acyl-CoA. The polypeptide is Phosphate acyltransferase (Rhodobacter capsulatus (Rhodopseudomonas capsulata)).